The following is a 96-amino-acid chain: MRKSKGFKSRSRYKLKRSIRPKRANPISRKIQVFEVGNKVHIIVDSSIHRGQPHPRFHGKTGEVVGQKGKAYLVAIKDGNKAKELIIRPEHLKLQE.

The interval 1–22 (MRKSKGFKSRSRYKLKRSIRPK) is disordered.

It belongs to the eukaryotic ribosomal protein eL21 family.

In Methanosphaera stadtmanae (strain ATCC 43021 / DSM 3091 / JCM 11832 / MCB-3), this protein is Large ribosomal subunit protein eL21.